We begin with the raw amino-acid sequence, 234 residues long: Peroxiredoxin-2E, chloroplastic (234 aa).

The transit peptide at 1 to 70 (MATSLSVSRF…TRSFATTPVT (70 aa)) directs the protein to the chloroplast. In terms of domain architecture, Thioredoxin spans 73–234 (ISVGDKLPDS…SSAEDMLKAL (162 aa)). Residue S82 is modified to Phosphoserine. C121 functions as the Cysteine sulfenic acid (-SOH) intermediate in the catalytic mechanism.

This sequence belongs to the peroxiredoxin family. Prx5 subfamily. In terms of assembly, monomer. Expressed in all tissues but predominantly in buds, siliques and seeds.

The protein localises to the plastid. It localises to the chloroplast stroma. It catalyses the reaction [glutaredoxin]-dithiol + a hydroperoxide = [glutaredoxin]-disulfide + an alcohol + H2O. Thiol-specific peroxidase that catalyzes the reduction of hydrogen peroxide and organic hydroperoxides to water and alcohols, respectively. Plays a role in cell protection against oxidative stress by detoxifying peroxides. May be involved in chloroplast redox homeostasis. This Arabidopsis thaliana (Mouse-ear cress) protein is Peroxiredoxin-2E, chloroplastic (PRXIIE).